Consider the following 503-residue polypeptide: Transcriptional regulator LovE (503 aa).

Polar residues predominate over residues 1 to 14 (MAADQGTFTTSVTL). The interval 1–21 (MAADQGTFTTSVTLSPVEGSR) is disordered. The segment at residues 35–67 (CDRCHAQKIKCTGNKEVTARAPCQRCQQAGLRC) is a DNA-binding region (zn(2)-C6 fungal-type). Disordered regions lie at residues 89–124 (ADPDPCLHMSSPPVPSQSLPLDVSESHSSNTSRQFL) and 331–362 (SHMNPWEGSRSESPSRDDTSSTSGHSSVDTIP). A compositionally biased stretch (basic and acidic residues) spans 339-349 (SRSESPSRDDT). Over residues 350-359 (SSTSGHSSVD) the composition is skewed to polar residues.

The protein localises to the nucleus. In terms of biological role, transcription factor that regulates the expression of the he gene cluster that mediates the biosynthesis of lovastatin (also known as mevinolin, mevacor or monacolin K), a hypolipidemic inhibitor of (3S)-hydroxymethylglutaryl-coenzyme A (HMG-CoA) reductase (HMGR). This chain is Transcriptional regulator LovE, found in Aspergillus terreus (strain NIH 2624 / FGSC A1156).